Consider the following 167-residue polypeptide: Putative peroxiredoxin-B (167 aa).

The region spanning 4 to 167 is the Thioredoxin domain; the sequence is IKRGDRFPTT…STAQKIIAKL (164 aa). Catalysis depends on cysteine 53, which acts as the Cysteine sulfenic acid (-SOH) intermediate. Positions 165-167 match the Microbody targeting signal motif; that stretch reads AKL.

It belongs to the peroxiredoxin family. Prx5 subfamily.

The protein localises to the peroxisome membrane. It catalyses the reaction a hydroperoxide + [thioredoxin]-dithiol = an alcohol + [thioredoxin]-disulfide + H2O. Its function is as follows. Thiol-specific peroxidase that catalyzes the reduction of hydrogen peroxide and organic hydroperoxides to water and alcohols, respectively. Plays a role in cell protection against oxidative stress by detoxifying peroxides and as sensor of hydrogen peroxide-mediated signaling events. The chain is Putative peroxiredoxin-B (PMPB) from Candida boidinii (Yeast).